The primary structure comprises 1898 residues: Receptor-type tyrosine-protein phosphatase F (1898 aa).

An N-terminal signal peptide occupies residues 1–29; sequence MTPEPAPGRTMVPLVPALVMLGLVAGAHG. Residues 30-1254 are Extracellular-facing; that stretch reads DSKPVFVKVP…QQQEEPELLW (1225 aa). 3 Ig-like C2-type domains span residues 33–123, 135–224, and 232–314; these read PVFV…AKLS, PSID…ANLY, and PRFS…AQVT. Cys-54 and Cys-107 are oxidised to a cystine. 68–77 lines the heparin pocket; it reads KKGKKVSSQR. A glycan (N-linked (GlcNAc...) asparagine) is linked at Asn-117. Cys-156 and Cys-207 are disulfide-bonded. Residues Asn-250 and Asn-295 are each glycosylated (N-linked (GlcNAc...) asparagine). A disulfide bridge connects residues Cys-253 and Cys-298. 8 Fibronectin type-III domains span residues 321-411, 416-510, 514-604, 609-706, 711-810, 811-905, 909-1001, and 1005-1089; these read PPID…TGEQ, PPRR…TQQG, QPAD…TAQS, PPQK…TDED, PPRK…TTGA, VPGR…PEDV, FPQN…TMPV, and FAKN…TAPD. Residues 399-418 form a disordered region; sequence PPSEAVRARTGEQAPSSPPR. The tract at residues 693 to 713 is disordered; sequence GPESSPVLVRTDEDVPSGPPR. Asn-721 carries N-linked (GlcNAc...) asparagine glycosylation. N-linked (GlcNAc...) asparagine glycans are attached at residues Asn-941 and Asn-957. A helical membrane pass occupies residues 1255-1275; the sequence is VTGPVLAVILIVLIVIAILLF. The Cytoplasmic segment spans residues 1276–1898; the sequence is KRKRTHSPSS…YLGSFDHYAT (623 aa). Phosphoserine is present on Ser-1296. Tyrosine-protein phosphatase domains are found at residues 1343–1598 and 1630–1889; these read FSQE…LLEA and MELE…ALEY. Residues Asp-1507, 1539–1545, and Gln-1583 contribute to the substrate site; that span reads CSAGVGR. Cys-1539 acts as the Phosphocysteine intermediate in catalysis. Cys-1830 (phosphocysteine intermediate) is an active-site residue.

This sequence belongs to the protein-tyrosine phosphatase family. Receptor class 2A subfamily. Interacts with GRIP1. Interacts with PPFIA1, PPFIA2 and PPFIA3. Interacts with INSR.

The protein resides in the membrane. The catalysed reaction is O-phospho-L-tyrosyl-[protein] + H2O = L-tyrosyl-[protein] + phosphate. In terms of biological role, possible cell adhesion receptor. It possesses an intrinsic protein tyrosine phosphatase activity (PTPase) and dephosphorylates EPHA2 regulating its activity. Functionally, the first PTPase domain has enzymatic activity, while the second one seems to affect the substrate specificity of the first one. This chain is Receptor-type tyrosine-protein phosphatase F (PTPRF), found in Bos taurus (Bovine).